Reading from the N-terminus, the 395-residue chain is MEQPHLAYRAFCQSREAAGQWRQLHAVQPLPRGRVLRDGVELINFSSNNYMGLADHPLLKQRAMAWTEQWGTGAQASRLVCGDLEPFARIEARLVAGKGCEAALVLNAGYQANSSVIPALLDKRVLGGEPLVFSDRLNHASMHHGVQLAGVRQLRYRHGDLDHLERLLKRHAGEKVAKFILSETVFSMDGDRIDVGGLIALKQRYGAFLYLDEAHATGVLGPDGFGLAAAYPGQVDLVMGTFSKGLGGFGAYVTCSHALRAYLINRAGGFIYSTALPPGVLGAMDAALELLPQMGEVRARVLAGAQRVRAALRAAGLDTGNSSTPIIPVMVGDEQRTLALSEGLRAEGLLGIAIRPPTVPEGTSRLRLSLSAAHSDEDWSLLAAAVPRCLREING.

Position 22 (R22) interacts with substrate. Residue 109–110 participates in pyridoxal 5'-phosphate binding; that stretch reads GY. Residue H139 coordinates substrate. Residues S187, 212-215, and 241-244 contribute to the pyridoxal 5'-phosphate site; these read DEAH and TFSK. K244 carries the N6-(pyridoxal phosphate)lysine modification. T358 is a binding site for substrate.

The protein belongs to the class-II pyridoxal-phosphate-dependent aminotransferase family. BioF subfamily. As to quaternary structure, homodimer. It depends on pyridoxal 5'-phosphate as a cofactor.

The enzyme catalyses 6-carboxyhexanoyl-[ACP] + L-alanine + H(+) = (8S)-8-amino-7-oxononanoate + holo-[ACP] + CO2. Its pathway is cofactor biosynthesis; biotin biosynthesis. In terms of biological role, catalyzes the decarboxylative condensation of pimeloyl-[acyl-carrier protein] and L-alanine to produce 8-amino-7-oxononanoate (AON), [acyl-carrier protein], and carbon dioxide. The sequence is that of Putative 8-amino-7-oxononanoate synthase (bioF) from Magnetococcus marinus (strain ATCC BAA-1437 / JCM 17883 / MC-1).